The chain runs to 845 residues: Protein TSD2 (845 aa).

The interval 193–283 is disordered; sequence DVDSDSESDS…SASATRLTNA (91 aa). 2 stretches are compositionally biased toward basic and acidic residues: residues 202–212 and 230–242; these read SDSHSDSHSDS and ARSH…DGSG. A compositionally biased stretch (basic residues) spans 243-272; it reads GKRKRGSHSPLSRRRQRHKQGQRHKPRHRS.

This sequence belongs to the CDC45 family.

The protein localises to the nucleus. Its function is as follows. Temperature-sensitive protein required for DNA synthesis. May be a transcription factor that regulates the level or influences the stability of DNA polymerases or auxiliary proteins. The polypeptide is Protein TSD2 (TSD2) (Mycosarcoma maydis (Corn smut fungus)).